Consider the following 194-residue polypeptide: NAD(P)H:quinone oxidoreductase (194 aa).

It belongs to the SsuE family. As to quaternary structure, homotetramer. Requires FMN as cofactor.

It catalyses the reaction a quinone + NADH + H(+) = a quinol + NAD(+). The catalysed reaction is a quinone + NADPH + H(+) = a quinol + NADP(+). The enzyme apparently serves as a quinone reductase in connection with conjugation reactions of hydroquinones involved in detoxification pathways. This chain is NAD(P)H:quinone oxidoreductase, found in Solanum tuberosum (Potato).